We begin with the raw amino-acid sequence, 459 residues long: Cysteine--tRNA ligase (459 aa).

Residue cysteine 28 coordinates Zn(2+). Residues 30 to 40 carry the 'HIGH' region motif; the sequence is ITVYDLCHVGH. 3 residues coordinate Zn(2+): cysteine 209, histidine 234, and glutamate 238. The 'KMSKS' region motif lies at 266 to 270; it reads KMSKS. ATP is bound at residue lysine 269.

The protein belongs to the class-I aminoacyl-tRNA synthetase family. In terms of assembly, monomer. The cofactor is Zn(2+).

It localises to the cytoplasm. The enzyme catalyses tRNA(Cys) + L-cysteine + ATP = L-cysteinyl-tRNA(Cys) + AMP + diphosphate. This is Cysteine--tRNA ligase (cysS) from Pasteurella multocida (strain Pm70).